The following is a 249-amino-acid chain: NAD kinase (249 aa).

Residue Asp49 is the Proton acceptor of the active site. NAD(+) contacts are provided by residues 49-50, Arg54, 115-116, Lys126, Arg143, Asp145, Ile153, 156-161, Ala180, and Gln211; these read DG, NE, and TGYAFS.

This sequence belongs to the NAD kinase family. Homotetramer. Requires a divalent metal cation as cofactor.

It localises to the cytoplasm. It carries out the reaction NAD(+) + ATP = ADP + NADP(+) + H(+). Functionally, involved in the regulation of the intracellular balance between NAD(H) and NADP(H), and is a key enzyme in the biosynthesis of NADP. Catalyzes specifically the phosphorylation on 2'-hydroxyl of the adenosine moiety of NAD to yield NADP. This is NAD kinase from Archaeoglobus fulgidus (strain ATCC 49558 / DSM 4304 / JCM 9628 / NBRC 100126 / VC-16).